A 246-amino-acid chain; its full sequence is Polyhedrin (246 aa).

The protein belongs to the polyhedrin family.

Its function is as follows. Major component of the virus occlusion bodies, which are large proteinaceous structures (polyhedra), that protect the virus from the outside environment for extended periods until they are ingested by insect larvae. The sequence is that of Polyhedrin (PH) from Lepidoptera (butterflies and moths).